Reading from the N-terminus, the 350-residue chain is Fe-S cluster assembly protein dre2 (350 aa).

Positions T23–V156 are N-terminal SAM-like domain. Residues P157–M242 are linker. A disordered region spans residues N165–P209. Residues K190–V208 are compositionally biased toward basic and acidic residues. C252, C263, C266, and C268 together coordinate [2Fe-2S] cluster. The segment at C252 to C268 is fe-S binding site A. C313, C316, C324, and C327 together coordinate [4Fe-4S] cluster. 2 consecutive short sequence motifs (cx2C motif) follow at residues C313–C316 and C324–C327. The segment at C313 to C327 is fe-S binding site B.

It belongs to the anamorsin family. In terms of assembly, monomer. Interacts with TAH18. Interacts with MIA40. [2Fe-2S] cluster is required as a cofactor. It depends on [4Fe-4S] cluster as a cofactor.

Its subcellular location is the cytoplasm. It localises to the mitochondrion intermembrane space. Functionally, component of the cytosolic iron-sulfur (Fe-S) protein assembly (CIA) machinery required for the maturation of extramitochondrial Fe-S proteins. Part of an electron transfer chain functioning in an early step of cytosolic Fe-S biogenesis, facilitating the de novo assembly of a [4Fe-4S] cluster on the scaffold complex CFD1-NBP35. Electrons are transferred to DRE2 from NADPH via the FAD- and FMN-containing protein TAH18. TAH18-DRE2 are also required for the assembly of the diferric tyrosyl radical cofactor of ribonucleotide reductase (RNR), probably by providing electrons for reduction during radical cofactor maturation in the catalytic small subunit RNR2. The chain is Fe-S cluster assembly protein dre2 from Sclerotinia sclerotiorum (strain ATCC 18683 / 1980 / Ss-1) (White mold).